The primary structure comprises 132 residues: MAYSTYGRHITMDLREVAFEKLNDVRFLKEVMYEAAAQCGATVVGESFVQFSPQGVTGVLVLSESHLSIHTYPEEGFAAIDCYTCGYTVDPAVACDYLKAALGGRVVGYRALRRGSGAIEDLTTLHLAAANN.

Residue serine 65 is the Schiff-base intermediate with substrate; via pyruvic acid of the active site. Serine 65 bears the Pyruvic acid (Ser); by autocatalysis mark. The Proton acceptor; for processing activity role is filled by histidine 70. The active-site Proton donor; for catalytic activity is cysteine 85.

It belongs to the prokaryotic AdoMetDC family. Type 1 subfamily. Heterotetramer of two alpha and two beta chains arranged as a dimer of alpha/beta heterodimers. Pyruvate is required as a cofactor. Post-translationally, is synthesized initially as an inactive proenzyme. Formation of the active enzyme involves a self-maturation process in which the active site pyruvoyl group is generated from an internal serine residue via an autocatalytic post-translational modification. Two non-identical subunits are generated from the proenzyme in this reaction, and the pyruvate is formed at the N-terminus of the alpha chain, which is derived from the carboxyl end of the proenzyme. The post-translation cleavage follows an unusual pathway, termed non-hydrolytic serinolysis, in which the side chain hydroxyl group of the serine supplies its oxygen atom to form the C-terminus of the beta chain, while the remainder of the serine residue undergoes an oxidative deamination to produce ammonia and the pyruvoyl group blocking the N-terminus of the alpha chain.

The catalysed reaction is S-adenosyl-L-methionine + H(+) = S-adenosyl 3-(methylsulfanyl)propylamine + CO2. Its pathway is amine and polyamine biosynthesis; S-adenosylmethioninamine biosynthesis; S-adenosylmethioninamine from S-adenosyl-L-methionine: step 1/1. In terms of biological role, catalyzes the decarboxylation of S-adenosylmethionine to S-adenosylmethioninamine (dcAdoMet), the propylamine donor required for the synthesis of the polyamines spermine and spermidine from the diamine putrescine. In Symbiobacterium thermophilum (strain DSM 24528 / JCM 14929 / IAM 14863 / T), this protein is S-adenosylmethionine decarboxylase proenzyme.